A 476-amino-acid polypeptide reads, in one-letter code: Protein transport protein Sec61 subunit alpha isoform 1 (476 aa).

The Cytoplasmic portion of the chain corresponds to 1 to 33 (MGIKFLEVIKPFCVILPEIQKPERKIQFKEKVL). A helical membrane pass occupies residues 34–53 (WTAITLFIFLVCCQIPLFGI). The Lumenal portion of the chain corresponds to 54 to 76 (MSSDSADPFYWMRVILASNRGTL). A helical membrane pass occupies residues 77 to 96 (MELGISPIVTSGLIMQLLAG). Topologically, residues 97–117 (AKIIEVGDTPKDRALFNGAQK) are cytoplasmic. The chain crosses the membrane as a helical span at residues 118–138 (LFGMTITIGQSIVYVMTGMYG). The Lumenal segment spans residues 139 to 144 (DPSEMG). Residues 145-165 (AGVCLLITIQLFVAGLIVLLL) traverse the membrane as a helical segment. Residues 166–172 (DELLQKG) are Cytoplasmic-facing. Residues 173–193 (YGLGSGISLFIATNICETIVW) form a helical membrane-spanning segment. Residues 194–240 (KAFSPTTVNTGRGMEFEGAIIALFHLLATRTDKVRALREAFYRQNLP) lie on the Lumenal side of the membrane. Residues 241 to 261 (NLMNLIATIFVFAVVIYFQGF) traverse the membrane as a helical segment. Residues 262 to 288 (RVDLPIKSARYRGQYNTYPIKLFYTSN) are Cytoplasmic-facing. Residues 289–309 (IPIILQSALVSNLYVISQMLS) traverse the membrane as a helical segment. The Lumenal segment spans residues 310–354 (ARFSGNLLVSLLGTWSDTSSGGPARAYPVGGLCYYLSPPESFGSV). The helical transmembrane segment at 355–375 (LEDPVHAVVYIVFMLGSCAFF) threads the bilayer. Over 376 to 420 (SKTWIEVSGSSAKDVAKQLKEQQMVMRGHRETSMVHELNRYIPTA) the chain is Cytoplasmic. A helical membrane pass occupies residues 421–441 (AAFGGLCIGALSVLADFLGAI). Residues 442–445 (GSGT) are Lumenal-facing. Residues 446–462 (GILLAVTIIYQYFEIFV) form a helical membrane-spanning segment. The Cytoplasmic segment spans residues 463–476 (KEQSEVGSMGALLF).

Belongs to the SecY/SEC61-alpha family. In terms of assembly, the SEC61 channel-forming translocon complex consists of channel-forming core components SEC61A1, SEC61B and SEC61G and different auxiliary components such as SEC62 and SEC63. The SEC61 channel associates with the multi-pass translocon (MPT) complex.

The protein localises to the endoplasmic reticulum membrane. In terms of biological role, component of SEC61 channel-forming translocon complex that mediates transport of signal peptide-containing precursor polypeptides across the endoplasmic reticulum (ER). Forms a ribosome receptor and a gated pore in the ER membrane, both functions required for cotranslational translocation of nascent polypeptides. May cooperate with auxiliary protein SEC62, SEC63 and HSPA5/BiP to enable post-translational transport of small presecretory proteins. The SEC61 channel is also involved in ER membrane insertion of transmembrane proteins: it mediates membrane insertion of the first few transmembrane segments of proteins, while insertion of subsequent transmembrane regions of multi-pass membrane proteins is mediated by the multi-pass translocon (MPT) complex. The SEC61 channel cooperates with the translocating protein TRAM1 to import nascent proteins into the ER. Controls the passive efflux of calcium ions from the ER lumen to the cytosol through SEC61 channel, contributing to the maintenance of cellular calcium homeostasis. Plays a critical role in nephrogenesis, specifically at pronephros stage. The polypeptide is Protein transport protein Sec61 subunit alpha isoform 1 (SEC61A1) (Bos taurus (Bovine)).